Reading from the N-terminus, the 469-residue chain is Sulfate adenylyltransferase subunit 1 (469 aa).

Residues Lys22–Arg238 enclose the tr-type G domain. A G1 region spans residues Gly31 to Ser38. Gly31–Ser38 serves as a coordination point for GTP. Positions Gly89 to Asp93 are G2. The interval Asp110–Gly113 is G3. Residues Asp110 to His114 and Asn165 to Asp168 each bind GTP. The segment at Asn165–Asp168 is G4. Residues Ser203–Leu205 form a G5 region.

The protein belongs to the TRAFAC class translation factor GTPase superfamily. Classic translation factor GTPase family. CysN/NodQ subfamily. As to quaternary structure, heterodimer composed of CysD, the smaller subunit, and CysN.

It carries out the reaction sulfate + ATP + H(+) = adenosine 5'-phosphosulfate + diphosphate. It participates in sulfur metabolism; hydrogen sulfide biosynthesis; sulfite from sulfate: step 1/3. In terms of biological role, with CysD forms the ATP sulfurylase (ATPS) that catalyzes the adenylation of sulfate producing adenosine 5'-phosphosulfate (APS) and diphosphate, the first enzymatic step in sulfur assimilation pathway. APS synthesis involves the formation of a high-energy phosphoric-sulfuric acid anhydride bond driven by GTP hydrolysis by CysN coupled to ATP hydrolysis by CysD. The chain is Sulfate adenylyltransferase subunit 1 from Aliarcobacter butzleri (strain RM4018) (Arcobacter butzleri).